The sequence spans 428 residues: Enolase (428 aa).

A (2R)-2-phosphoglycerate-binding site is contributed by glutamine 165. Glutamate 207 serves as the catalytic Proton donor. Residues aspartate 244, glutamate 283, and aspartate 310 each contribute to the Mg(2+) site. The (2R)-2-phosphoglycerate site is built by lysine 335, arginine 364, serine 365, and lysine 386. The active-site Proton acceptor is the lysine 335.

The protein belongs to the enolase family. It depends on Mg(2+) as a cofactor.

Its subcellular location is the cytoplasm. It localises to the secreted. The protein localises to the cell surface. It carries out the reaction (2R)-2-phosphoglycerate = phosphoenolpyruvate + H2O. It participates in carbohydrate degradation; glycolysis; pyruvate from D-glyceraldehyde 3-phosphate: step 4/5. Functionally, catalyzes the reversible conversion of 2-phosphoglycerate (2-PG) into phosphoenolpyruvate (PEP). It is essential for the degradation of carbohydrates via glycolysis. The chain is Enolase from Chlamydia pneumoniae (Chlamydophila pneumoniae).